A 165-amino-acid polypeptide reads, in one-letter code: Large ribosomal subunit protein uL10 (165 aa).

This sequence belongs to the universal ribosomal protein uL10 family. Part of the ribosomal stalk of the 50S ribosomal subunit. The N-terminus interacts with L11 and the large rRNA to form the base of the stalk. The C-terminus forms an elongated spine to which L12 dimers bind in a sequential fashion forming a multimeric L10(L12)X complex.

Its function is as follows. Forms part of the ribosomal stalk, playing a central role in the interaction of the ribosome with GTP-bound translation factors. The sequence is that of Large ribosomal subunit protein uL10 from Borrelia turicatae (strain 91E135).